Here is a 515-residue protein sequence, read N- to C-terminus: ATP synthase subunit alpha (515 aa).

171 to 178 (GDRQTGKT) contributes to the ATP binding site.

It belongs to the ATPase alpha/beta chains family. As to quaternary structure, F-type ATPases have 2 components, CF(1) - the catalytic core - and CF(0) - the membrane proton channel. CF(1) has five subunits: alpha(3), beta(3), gamma(1), delta(1), epsilon(1). CF(0) has three main subunits: a(1), b(2) and c(9-12). The alpha and beta chains form an alternating ring which encloses part of the gamma chain. CF(1) is attached to CF(0) by a central stalk formed by the gamma and epsilon chains, while a peripheral stalk is formed by the delta and b chains.

The protein localises to the cell inner membrane. The enzyme catalyses ATP + H2O + 4 H(+)(in) = ADP + phosphate + 5 H(+)(out). Functionally, produces ATP from ADP in the presence of a proton gradient across the membrane. The alpha chain is a regulatory subunit. The protein is ATP synthase subunit alpha of Xanthomonas axonopodis pv. citri (strain 306).